A 396-amino-acid chain; its full sequence is Ubiquitin-like modifier-activating enzyme 5 (396 aa).

ATP contacts are provided by glycine 76, aspartate 97, lysine 120, asparagine 143, and asparagine 177. Cysteine 219 and cysteine 222 together coordinate Zn(2+). Cysteine 243 (glycyl thioester intermediate) is an active-site residue. Zn(2+)-binding residues include cysteine 296 and cysteine 301.

The protein belongs to the ubiquitin-activating E1 family. UBA5 subfamily.

E1-like enzyme which activates UFM1. This Drosophila ananassae (Fruit fly) protein is Ubiquitin-like modifier-activating enzyme 5.